Here is an 89-residue protein sequence, read N- to C-terminus: Small ribosomal subunit protein uS15 (89 aa).

Belongs to the universal ribosomal protein uS15 family. Part of the 30S ribosomal subunit. Forms a bridge to the 50S subunit in the 70S ribosome, contacting the 23S rRNA.

Functionally, one of the primary rRNA binding proteins, it binds directly to 16S rRNA where it helps nucleate assembly of the platform of the 30S subunit by binding and bridging several RNA helices of the 16S rRNA. In terms of biological role, forms an intersubunit bridge (bridge B4) with the 23S rRNA of the 50S subunit in the ribosome. The sequence is that of Small ribosomal subunit protein uS15 from Bordetella avium (strain 197N).